Consider the following 822-residue polypeptide: Putative ESX-1 scaffolding and assembly protein SaeB (822 aa).

In terms of biological role, may be involved in assembly of the ESX-1 / type VII specialized secretion system (T7SS), which exports several proteins including EsxA and EsxB. Involved in DNA conjugation in recipient (MDK8) but not donor (mc(2)155) strain. In Mycolicibacterium smegmatis (strain ATCC 700084 / mc(2)155) (Mycobacterium smegmatis), this protein is Putative ESX-1 scaffolding and assembly protein SaeB.